The primary structure comprises 298 residues: N-acetylmuramic acid 6-phosphate etherase (298 aa).

Positions 55–218 (IHAQVSGGGR…STGLMIKSGK (164 aa)) constitute an SIS domain. Glutamate 83 (proton donor) is an active-site residue. Residue glutamate 114 is part of the active site.

It belongs to the GCKR-like family. MurNAc-6-P etherase subfamily. As to quaternary structure, homodimer.

It catalyses the reaction N-acetyl-D-muramate 6-phosphate + H2O = N-acetyl-D-glucosamine 6-phosphate + (R)-lactate. Its pathway is amino-sugar metabolism; 1,6-anhydro-N-acetylmuramate degradation. It participates in amino-sugar metabolism; N-acetylmuramate degradation. The protein operates within cell wall biogenesis; peptidoglycan recycling. In terms of biological role, specifically catalyzes the cleavage of the D-lactyl ether substituent of MurNAc 6-phosphate, producing GlcNAc 6-phosphate and D-lactate. Together with AnmK, is also required for the utilization of anhydro-N-acetylmuramic acid (anhMurNAc) either imported from the medium or derived from its own cell wall murein, and thus plays a role in cell wall recycling. In Escherichia coli O8 (strain IAI1), this protein is N-acetylmuramic acid 6-phosphate etherase.